Here is a 272-residue protein sequence, read N- to C-terminus: MALWGLPGSAVLAASVFVGGAVSSPLVAADNTGSHTLHSRAETTPSSPTNNPGNGHPEYIAYVLVPVFFVMGLLGVLICHLLKKKGYRCTTEAEQEVEEEKVEKIELNDSINENSDTVGQIVQYIMKNEANADILKAMVADNSVGDIESPVTPSTPGSPPVSPGPLSPGATPGKHVCGHHLHTVGGVVERDVCQRCRHKRWHFIKPTNKTKEGRPRRQGEVTVLSVGRFRVTKVEHKSNQKERRSLMSVSGIESVNGDVPATPVKRERSDTE.

The N-terminal stretch at 1 to 23 is a signal peptide; the sequence is MALWGLPGSAVLAASVFVGGAVS. Topologically, residues 24–58 are extracellular; the sequence is SPLVAADNTGSHTLHSRAETTPSSPTNNPGNGHPE. A disordered region spans residues 33 to 52; that stretch reads GSHTLHSRAETTPSSPTNNP. The helical transmembrane segment at 59–79 threads the bilayer; the sequence is YIAYVLVPVFFVMGLLGVLIC. At 80–272 the chain is on the cytoplasmic side; sequence HLLKKKGYRC…PVKRERSDTE (193 aa). The stretch at 90–114 forms a coiled coil; it reads TTEAEQEVEEEKVEKIELNDSINEN. Phosphoserine is present on residues serine 110 and serine 115. Disordered stretches follow at residues 146 to 171 and 235 to 272; these read DIES…PGAT and EHKS…SDTE. Pro residues predominate over residues 156–166; that stretch reads PGSPPVSPGPL. Basic and acidic residues predominate over residues 235-245; the sequence is EHKSNQKERRS. Serine 245 and serine 248 each carry phosphoserine.

The protein belongs to the RELT family. Interacts with RELT, RELL2, OXSR1 and PLSCR1.

It is found in the cell membrane. Its function is as follows. Induces activation of MAPK14/p38 cascade, when overexpressed. Induces apoptosis, when overexpressed. This is RELT-like protein 1 (Rell1) from Mus musculus (Mouse).